The chain runs to 312 residues: Fibrinogen-like protein 1 (312 aa).

Residues methionine 1 to alanine 22 form the signal peptide. The stretch at leucine 39–valine 60 forms a coiled coil. One can recognise a Fibrinogen C-terminal domain in the interval leucine 74–aspartate 306. Intrachain disulfides connect cysteine 83/cysteine 112 and cysteine 248/cysteine 261.

Homodimer. Interacts (via the Fibrinogen C-terminal domain) with LAG3 (via Ig-like domains 1 and 2).

Its subcellular location is the secreted. Immune suppressive molecule that inhibits antigen-specific T-cell activation by acting as a major ligand of LAG3. Responsible for LAG3 T-cell inhibitory function. Binds LAG3 independently from MHC class II (MHC-II). Secreted by, and promotes growth of, hepatocytes. This Bos taurus (Bovine) protein is Fibrinogen-like protein 1 (FGL1).